Consider the following 179-residue polypeptide: DELTA-miturgitoxin-Cp2a (179 aa).

The N-terminal stretch at 1–20 (MKFSLFFGVLFLAILHSCLS) is a signal peptide. A propeptide spanning residues 21 to 47 (ESEKDLTDEDHFRSSDSFLSEIQEESR) is cleaved from the precursor. Positions 44-47 (EESR) match the Processing quadruplet motif motif. 8 disulfides stabilise this stretch: Cys51–Cys66, Cys58–Cys75, Cys65–Cys88, Cys77–Cys86, Cys115–Cys130, Cys122–Cys139, Cys129–Cys158, and Cys141–Cys156. Val178 bears the Valine amide mark.

This sequence belongs to the spider toxin CSTX family. Double-CSTX subfamily. In terms of processing, cleavage of the propeptide depends on the processing quadruplet motif (XXXR, with at least one of X being E). As to expression, expressed by the venom gland.

It localises to the secreted. In terms of biological role, spider venom toxin that exhibits cytolytic activity by forming an alpha-helix across the membrane. Lethal to insect larvae. In Cheiracanthium punctorium (Yellow sac spider), this protein is DELTA-miturgitoxin-Cp2a.